A 273-amino-acid chain; its full sequence is F-actin-capping protein subunit alpha (273 aa).

The protein belongs to the F-actin-capping protein alpha subunit family. As to quaternary structure, heterodimer of an alpha and a beta subunit.

It is found in the cytoplasm. Its subcellular location is the cytoskeleton. F-actin-capping proteins bind in a Ca(2+)-independent manner to the fast growing ends of actin filaments (barbed end) thereby blocking the exchange of subunits at these ends. Unlike other capping proteins (such as gelsolin and severin), these proteins do not sever actin filaments. This chain is F-actin-capping protein subunit alpha (cap1), found in Emericella nidulans (strain FGSC A4 / ATCC 38163 / CBS 112.46 / NRRL 194 / M139) (Aspergillus nidulans).